Consider the following 21-residue polypeptide: Serine protease inhibitor 3 (21 aa).

Belongs to the protease inhibitor I3 (leguminous Kunitz-type inhibitor) family. Tubers.

The protein localises to the vacuole. In terms of biological role, inhibits trypsin and chymotrypsin (serine proteases). Does not inhibit elastase, subtilisin, cathepsin L nor papain (serine and cysteine proteases). Protects the plant by inhibiting proteases of invading organisms, decreasing both hyphal growth and zoospores germination of Phytophthora infestans. The chain is Serine protease inhibitor 3 from Solanum tuberosum (Potato).